Consider the following 648-residue polypeptide: MSKVSSIFDTPAPDPRPATTENGAAAKPAARKKKSPAAATKKQLIDQLIREMSQDEDNNDSVDQAPPAKKSRKKADSSGNNNTSKSSVKDKPAKPKKPKTAGLKIKLQDHRKHKEKLRKSLQGVENSRQAAASTSMLEASFNGDSLKDRSNHSTPVHHKGAKAAKKNKNKSHIMPLPLTFTPSKVVVKQEPKTPRRPTMLNVEASSGSLDSVEIGREKFSWVIGPSTTVDEFMAQFWEKKPFLVQRNDPTYYANLLSRGKIDEMLRNNNIEYTKNLDVTSYREGVRETHNPDGRALPPDVWAFYEEGCSIRMLNPQTYLPGVYEMNVKLQEFFHCMTGSNFYLTPPNSQGFAPHYDDIEAFVLQVEGRKHWKLYSPRTASEVLARVSSPNFTQEEIGVPILEVTLEPGDLLYFPRGIIHQASTVPGHHSLHVTMSVYQKNSWADLLELYLPHALSQAAENHLELRRGIPQDLHQHFGIVHSDNETPTRKDLIKKIKSLVDKIFSEEAIDVAVDQLAKRFQHDALPPLLTDQERAQTAYGANYAFNPDGTVPLQTAFTERTTIRLLRRNIVRLVNEENTLRLYYHTENSREYHEYEPNFLEVDQDAALGVELLVKIYPETVAIGALPVEDKVEFAKSLWEKGLIVARGE.

The disordered stretch occupies residues 1-168 (MSKVSSIFDT…KGAKAAKKNK (168 aa)). Residues 17–28 (PATTENGAAAKP) are compositionally biased toward low complexity. Basic residues predominate over residues 109 to 119 (DHRKHKEKLRK). Residues 123 to 137 (GVENSRQAAASTSML) are compositionally biased toward polar residues. Residues 155 to 168 (PVHHKGAKAAKKNK) are compositionally biased toward basic residues. Residues 308–453 (CSIRMLNPQT…DLLELYLPHA (146 aa)) form the JmjC domain. Residues His354, Asp356, and His419 each contribute to the Fe cation site.

It belongs to the ROX family. NO66 subfamily. The cofactor is Fe(2+).

It is found in the nucleus. The enzyme catalyses N(6),N(6)-dimethyl-L-lysyl(36)-[histone H3] + 2 2-oxoglutarate + 2 O2 = L-lysyl(36)-[histone H3] + 2 formaldehyde + 2 succinate + 2 CO2. Functionally, oxygenase that can act as both a histone lysine demethylase and a ribosomal histidine hydroxylase. Specifically demethylates 'Lys-4' (H3K4me) and 'Lys-36' (H3K36me) of histone H3, thereby playing a central role in histone code. The polypeptide is Bifunctional lysine-specific demethylase and histidyl-hydroxylase NO66 (Culex quinquefasciatus (Southern house mosquito)).